Consider the following 161-residue polypeptide: Urease accessory protein UreE (161 aa).

The protein belongs to the UreE family.

The protein resides in the cytoplasm. Involved in urease metallocenter assembly. Binds nickel. Probably functions as a nickel donor during metallocenter assembly. The chain is Urease accessory protein UreE from Pseudarthrobacter chlorophenolicus (strain ATCC 700700 / DSM 12829 / CIP 107037 / JCM 12360 / KCTC 9906 / NCIMB 13794 / A6) (Arthrobacter chlorophenolicus).